A 154-amino-acid polypeptide reads, in one-letter code: Myoglobin (154 aa).

The Globin domain occupies 1–147; sequence MADVKKNCLA…FNDECQHQLA (147 aa). Position 96 (histidine 96) interacts with heme b.

It belongs to the globin family.

The protein resides in the cytoplasm. The polypeptide is Myoglobin (GLBB) (Nippostrongylus brasiliensis (Rat hookworm)).